The primary structure comprises 301 residues: Acetyl-coenzyme A carboxylase carboxyl transferase subunit beta (301 aa).

The 270-residue stretch at 23–292 folds into the CoA carboxyltransferase N-terminal domain; the sequence is VWTKCDSCGQ…PSPDEPRESV (270 aa). Zn(2+) is bound by residues Cys-27, Cys-30, Cys-46, and Cys-49. A C4-type zinc finger spans residues 27–49; sequence CDSCGQVLYRAELERNLEVCPKC. The interval 280-301 is disordered; that stretch reads LPAPSPDEPRESVVVPDQEPEA.

It belongs to the AccD/PCCB family. In terms of assembly, acetyl-CoA carboxylase is a heterohexamer composed of biotin carboxyl carrier protein (AccB), biotin carboxylase (AccC) and two subunits each of ACCase subunit alpha (AccA) and ACCase subunit beta (AccD). Requires Zn(2+) as cofactor.

The protein localises to the cytoplasm. The catalysed reaction is N(6)-carboxybiotinyl-L-lysyl-[protein] + acetyl-CoA = N(6)-biotinyl-L-lysyl-[protein] + malonyl-CoA. It functions in the pathway lipid metabolism; malonyl-CoA biosynthesis; malonyl-CoA from acetyl-CoA: step 1/1. In terms of biological role, component of the acetyl coenzyme A carboxylase (ACC) complex. Biotin carboxylase (BC) catalyzes the carboxylation of biotin on its carrier protein (BCCP) and then the CO(2) group is transferred by the transcarboxylase to acetyl-CoA to form malonyl-CoA. The chain is Acetyl-coenzyme A carboxylase carboxyl transferase subunit beta from Enterobacter sp. (strain 638).